Reading from the N-terminus, the 453-residue chain is UDP-glycosyltransferase 79B3 (453 aa).

Residues S266, 325-327, 342-350, and 364-367 each bind UDP-alpha-D-glucose; these read VQQ, HCGFGSMWE, and LGDQ.

Belongs to the UDP-glycosyltransferase family.

This chain is UDP-glycosyltransferase 79B3 (UGT79B3), found in Arabidopsis thaliana (Mouse-ear cress).